The sequence spans 293 residues: Probable mediator of RNA polymerase II transcription subunit 15b (293 aa).

It belongs to the plant Mediator complex subunit 15 family. In terms of assembly, component of the Mediator complex.

Its subcellular location is the nucleus. Its function is as follows. Component of the Mediator complex, a coactivator involved in the regulated transcription of nearly all RNA polymerase II-dependent genes. Mediator functions as a bridge to convey information from gene-specific regulatory proteins to the basal RNA polymerase II transcription machinery. The Mediator complex, having a compact conformation in its free form, is recruited to promoters by direct interactions with regulatory proteins and serves for the assembly of a functional preinitiation complex with RNA polymerase II and the general transcription factors. The polypeptide is Probable mediator of RNA polymerase II transcription subunit 15b (MED15B) (Arabidopsis thaliana (Mouse-ear cress)).